The sequence spans 605 residues: DNA primase (605 aa).

The CHC2-type zinc-finger motif lies at 37–61 (CPFHADKNPSMHINPIKGFYHCFAC). Residues 248–329 (KEIIVCEGYM…DGKVAILQGG (82 aa)) form the Toprim domain. Mg(2+)-binding residues include glutamate 254, aspartate 298, and aspartate 300.

This sequence belongs to the DnaG primase family. As to quaternary structure, monomer. Interacts with DnaB. It depends on Zn(2+) as a cofactor. The cofactor is Mg(2+).

It catalyses the reaction ssDNA + n NTP = ssDNA/pppN(pN)n-1 hybrid + (n-1) diphosphate.. RNA polymerase that catalyzes the synthesis of short RNA molecules used as primers for DNA polymerase during DNA replication. The polypeptide is DNA primase (Campylobacter jejuni subsp. jejuni serotype O:2 (strain ATCC 700819 / NCTC 11168)).